The primary structure comprises 442 residues: Cytochrome c biogenesis CcmF C-terminal-like mitochondrial protein (442 aa).

3 consecutive transmembrane segments (helical) span residues 6–26 (NFFF…PVLL), 39–59 (PFFN…LVYL), and 122–142 (YLES…FFLA). The disordered stretch occupies residues 151-175 (RARRRKGQTLRPNGNEQRRNDKMRC). Positions 166–175 (EQRRNDKMRC) are enriched in basic and acidic residues. The chain crosses the membrane as a helical span at residues 411 to 431 (FIFFIWIGFMLASLGGLPSLL).

The protein belongs to the CcmF/CycK/Ccl1/NrfE/CcsA family. Interacts with CCMFN2.

The protein resides in the mitochondrion inner membrane. Functionally, forms a complex with CCMFN1, CCMFN2 and CCMH that performs the assembly of heme with c-type apocytochromes in mitochondria. The protein is Cytochrome c biogenesis CcmF C-terminal-like mitochondrial protein (CCMFC) of Arabidopsis thaliana (Mouse-ear cress).